Consider the following 349-residue polypeptide: NADH-quinone oxidoreductase subunit H (349 aa).

8 consecutive transmembrane segments (helical) span residues 14–34, 85–105, 120–140, 164–184, 196–216, 243–263, 285–305, and 324–344; these read LLVWTLLKIIAIVLPMLGCVA, GLFLLAPVLSIGPALAAWAVI, LLYILALTSMGVYGVIIAGWA, MGFALVGVLMVSGSLNLVDIV, ILSWNWIPLFPLFIVYLISGV, GMAFAIFFLAEYANMILVAAL, AGGFFWLAVKMALVLFCFLWF, and VFIPVTLVWILVVGAWMFSPL.

It belongs to the complex I subunit 1 family. In terms of assembly, NDH-1 is composed of 14 different subunits. Subunits NuoA, H, J, K, L, M, N constitute the membrane sector of the complex.

It is found in the cell inner membrane. The catalysed reaction is a quinone + NADH + 5 H(+)(in) = a quinol + NAD(+) + 4 H(+)(out). In terms of biological role, NDH-1 shuttles electrons from NADH, via FMN and iron-sulfur (Fe-S) centers, to quinones in the respiratory chain. The immediate electron acceptor for the enzyme in this species is believed to be ubiquinone. Couples the redox reaction to proton translocation (for every two electrons transferred, four hydrogen ions are translocated across the cytoplasmic membrane), and thus conserves the redox energy in a proton gradient. This subunit may bind ubiquinone. The protein is NADH-quinone oxidoreductase subunit H of Chromobacterium violaceum (strain ATCC 12472 / DSM 30191 / JCM 1249 / CCUG 213 / NBRC 12614 / NCIMB 9131 / NCTC 9757 / MK).